We begin with the raw amino-acid sequence, 377 residues long: MLARFLSSLLKASVTALAVVVAFGFAANFARAERLKNLATFQGVRDNPLVGYGLVVGLDNTGDQTMQTPFTTQSLTNMLSQLGITLPAGKNMQLKNVAAVMVTATLPAFAQPGSQLDIVVSSMGNAKSLRGGTLLMTPLKGADGQVYAIAQGNMLVGGAGASANGSKVQVNQLAVGRIANGAIVERAVAAFQPDGGVLNLELKDTDFGTAERVVEAINRSMGGGVAAALDGRVVQVRAPQSPSARVGFLARIENLDVTPAKAAAKVILNARTGSIVMNQAVTVEDCAVAHGNLSVVINTQPVISQPAPFSGGQTVVAPVSQIDMKQQGGSLQIVKAGASLAAVVKGLNALGATPADLQTILEAMRAAGALRAELEII.

Positions 1 to 30 (MLARFLSSLLKASVTALAVVVAFGFAANFA) are cleaved as a signal peptide.

This sequence belongs to the FlgI family. The basal body constitutes a major portion of the flagellar organelle and consists of four rings (L,P,S, and M) mounted on a central rod.

The protein localises to the periplasm. The protein resides in the bacterial flagellum basal body. Functionally, assembles around the rod to form the L-ring and probably protects the motor/basal body from shearing forces during rotation. This chain is Flagellar P-ring protein, found in Cupriavidus pinatubonensis (strain JMP 134 / LMG 1197) (Cupriavidus necator (strain JMP 134)).